The primary structure comprises 261 residues: Probable septum site-determining protein MinC (261 aa).

A disordered region spans residues 106-145 (RAPAAKPADEAEPAAVPAVETAAAPAAAAAPEQPSEPAPT). Residues 118-144 (PAAVPAVETAAAPAAAAAPEQPSEPAP) show a composition bias toward low complexity.

It belongs to the MinC family. Interacts with MinD and FtsZ.

Functionally, cell division inhibitor that blocks the formation of polar Z ring septums. Rapidly oscillates between the poles of the cell to destabilize FtsZ filaments that have formed before they mature into polar Z rings. Prevents FtsZ polymerization. The protein is Probable septum site-determining protein MinC of Burkholderia orbicola (strain AU 1054).